The primary structure comprises 245 residues: Adenylate kinase (245 aa).

15–20 (GSGKGT) is an ATP binding site. The tract at residues 35-64 (SSGDLLRGAVSKDTPLSQEIKSYLDQGKLL) is NMP. AMP is bound by residues Ser-36, Arg-41, 62–64 (KLL), 103–106 (GFPR), and Gln-110. An LID region spans residues 143–176 (SRYICPACQGIYNEQQGFSSCPKCSVELIRRSDD). Arg-144 contacts ATP. Zn(2+) contacts are provided by Cys-147 and Cys-150. Position 153 to 154 (153 to 154 (IY)) interacts with ATP. Cys-163 and Cys-166 together coordinate Zn(2+). Positions 173 and 184 each coordinate AMP. Ala-212 is a binding site for ATP.

The protein belongs to the adenylate kinase family. Monomer.

The protein resides in the cytoplasm. The enzyme catalyses AMP + ATP = 2 ADP. It functions in the pathway purine metabolism; AMP biosynthesis via salvage pathway; AMP from ADP: step 1/1. Its function is as follows. Catalyzes the reversible transfer of the terminal phosphate group between ATP and AMP. Plays an important role in cellular energy homeostasis and in adenine nucleotide metabolism. In Chlamydia trachomatis serovar L2 (strain ATCC VR-902B / DSM 19102 / 434/Bu), this protein is Adenylate kinase.